The chain runs to 424 residues: Glutathione reductase (424 aa).

Lysine 8 contributes to the FAD binding site. Residue tyrosine 56 participates in glutathione binding. Alanine 72 is a binding site for FAD. Residues alanine 137, isoleucine 140, glutamate 143, arginine 160, arginine 166, and glycine 236 each contribute to the NADP(+) site. Aspartate 277 contributes to the FAD binding site. Leucine 283 contacts NADP(+). Threonine 285 provides a ligand contact to FAD. Arginine 293 is a glutathione binding site. Valine 316 is a binding site for NADP(+). Histidine 413 lines the FAD pocket. The active-site Proton acceptor is histidine 413.

This sequence belongs to the class-I pyridine nucleotide-disulfide oxidoreductase family. As to quaternary structure, homodimer; disulfide-linked. Requires FAD as cofactor.

Its subcellular location is the mitochondrion. It localises to the cytoplasm. It catalyses the reaction 2 glutathione + NADP(+) = glutathione disulfide + NADPH + H(+). Functionally, catalyzes the reduction of glutathione disulfide (GSSG) to reduced glutathione (GSH). Constitutes the major mechanism to maintain a high GSH:GSSG ratio in the cytosol. The chain is Glutathione reductase (Gsr) from Rattus norvegicus (Rat).